The following is a 215-amino-acid chain: Dual specificity phosphatase 29 (215 aa).

In terms of domain architecture, Tyrosine-protein phosphatase spans H53–K201. H145–R152 contributes to the substrate binding site. The Phosphocysteine intermediate role is filled by C146.

This sequence belongs to the protein-tyrosine phosphatase family. Non-receptor class dual specificity subfamily. Homodimer. Interacts with PRKAA2.

The protein resides in the cytoplasm. Its subcellular location is the nucleus. It catalyses the reaction O-phospho-L-tyrosyl-[protein] + H2O = L-tyrosyl-[protein] + phosphate. It carries out the reaction O-phospho-L-seryl-[protein] + H2O = L-seryl-[protein] + phosphate. The catalysed reaction is O-phospho-L-threonyl-[protein] + H2O = L-threonyl-[protein] + phosphate. Its function is as follows. Dual specificity phosphatase able to dephosphorylate phosphotyrosine, phosphoserine and phosphothreonine residues within the same substrate, with a preference for phosphotyrosine as a substrate. Involved in the modulation of intracellular signaling cascades. In skeletal muscle regulates systemic glucose homeostasis by activating, AMPK, an energy sensor protein kinase. Affects MAP kinase signaling though modulation of the MAPK1/2 cascade in skeletal muscle promoting muscle cell differentiation, development and atrophy. The sequence is that of Dual specificity phosphatase 29 (Dusp29) from Rattus norvegicus (Rat).